The sequence spans 103 residues: Thrombin inhibitor rhodniin (103 aa).

2 consecutive Kazal-like domains span residues 1–50 (EGGE…PCEP) and 51–103 (DEDE…PCRT). Intrachain disulfides connect Cys6/Cys31, Cys8/Cys27, Cys16/Cys48, Cys57/Cys84, Cys60/Cys80, and Cys69/Cys101.

It localises to the secreted. Its function is as follows. Thrombin-specific inhibitor. Appears to form 1:1 complexes with thrombin. Prevents blood clotting to allow the insect to feed on blood. The polypeptide is Thrombin inhibitor rhodniin (Rhodnius prolixus (Triatomid bug)).